The chain runs to 428 residues: Serine--tRNA ligase (428 aa).

An L-serine-binding site is contributed by 235 to 237 (TAE). 266-268 (RSE) serves as a coordination point for ATP. An L-serine-binding site is contributed by Glu289. 353–356 (EISS) is a binding site for ATP. Ser389 lines the L-serine pocket.

The protein belongs to the class-II aminoacyl-tRNA synthetase family. Type-1 seryl-tRNA synthetase subfamily. As to quaternary structure, homodimer. The tRNA molecule binds across the dimer.

The protein resides in the cytoplasm. It catalyses the reaction tRNA(Ser) + L-serine + ATP = L-seryl-tRNA(Ser) + AMP + diphosphate + H(+). It carries out the reaction tRNA(Sec) + L-serine + ATP = L-seryl-tRNA(Sec) + AMP + diphosphate + H(+). The protein operates within aminoacyl-tRNA biosynthesis; selenocysteinyl-tRNA(Sec) biosynthesis; L-seryl-tRNA(Sec) from L-serine and tRNA(Sec): step 1/1. In terms of biological role, catalyzes the attachment of serine to tRNA(Ser). Is also able to aminoacylate tRNA(Sec) with serine, to form the misacylated tRNA L-seryl-tRNA(Sec), which will be further converted into selenocysteinyl-tRNA(Sec). The polypeptide is Serine--tRNA ligase (Psychromonas ingrahamii (strain DSM 17664 / CCUG 51855 / 37)).